We begin with the raw amino-acid sequence, 138 residues long: Large ribosomal subunit protein uL16 (138 aa).

Over residues 1–15 (MLSPKKVKYRKKQRG) the composition is skewed to basic residues. The interval 1-21 (MLSPKKVKYRKKQRGRLSGEA) is disordered.

The protein belongs to the universal ribosomal protein uL16 family. As to quaternary structure, part of the 50S ribosomal subunit.

Its function is as follows. Binds 23S rRNA and is also seen to make contacts with the A and possibly P site tRNAs. The sequence is that of Large ribosomal subunit protein uL16 from Borrelia garinii subsp. bavariensis (strain ATCC BAA-2496 / DSM 23469 / PBi) (Borreliella bavariensis).